Reading from the N-terminus, the 203-residue chain is Dephospho-CoA kinase (203 aa).

Residues 6-203 enclose the DPCK domain; sequence RLGITGGIAC…SLLGRGGKGG (198 aa). 14–19 contacts ATP; that stretch reads ACGKSV.

Belongs to the CoaE family.

The protein localises to the cytoplasm. The catalysed reaction is 3'-dephospho-CoA + ATP = ADP + CoA + H(+). It functions in the pathway cofactor biosynthesis; coenzyme A biosynthesis; CoA from (R)-pantothenate: step 5/5. Functionally, catalyzes the phosphorylation of the 3'-hydroxyl group of dephosphocoenzyme A to form coenzyme A. This chain is Dephospho-CoA kinase, found in Thermosynechococcus vestitus (strain NIES-2133 / IAM M-273 / BP-1).